We begin with the raw amino-acid sequence, 381 residues long: Succinyl-diaminopimelate desuccinylase (381 aa).

His-72 serves as a coordination point for Zn(2+). Residue Asp-74 is part of the active site. Asp-103 lines the Zn(2+) pocket. Residue Glu-133 is the Proton acceptor of the active site. 3 residues coordinate Zn(2+): Glu-134, Glu-163, and His-348.

It belongs to the peptidase M20A family. DapE subfamily. In terms of assembly, homodimer. The cofactor is Zn(2+). Co(2+) is required as a cofactor.

It catalyses the reaction N-succinyl-(2S,6S)-2,6-diaminopimelate + H2O = (2S,6S)-2,6-diaminopimelate + succinate. Its pathway is amino-acid biosynthesis; L-lysine biosynthesis via DAP pathway; LL-2,6-diaminopimelate from (S)-tetrahydrodipicolinate (succinylase route): step 3/3. In terms of biological role, catalyzes the hydrolysis of N-succinyl-L,L-diaminopimelic acid (SDAP), forming succinate and LL-2,6-diaminopimelate (DAP), an intermediate involved in the bacterial biosynthesis of lysine and meso-diaminopimelic acid, an essential component of bacterial cell walls. This is Succinyl-diaminopimelate desuccinylase from Anaplasma marginale (strain Florida).